The sequence spans 443 residues: ATP-dependent protease ATPase subunit HslU (443 aa).

ATP is bound by residues isoleucine 18, 60–65, aspartate 256, glutamate 321, and arginine 393; that span reads GVGKTE.

The protein belongs to the ClpX chaperone family. HslU subfamily. As to quaternary structure, a double ring-shaped homohexamer of HslV is capped on each side by a ring-shaped HslU homohexamer. The assembly of the HslU/HslV complex is dependent on binding of ATP.

It is found in the cytoplasm. In terms of biological role, ATPase subunit of a proteasome-like degradation complex; this subunit has chaperone activity. The binding of ATP and its subsequent hydrolysis by HslU are essential for unfolding of protein substrates subsequently hydrolyzed by HslV. HslU recognizes the N-terminal part of its protein substrates and unfolds these before they are guided to HslV for hydrolysis. This is ATP-dependent protease ATPase subunit HslU from Buchnera aphidicola subsp. Schizaphis graminum (strain Sg).